A 131-amino-acid chain; its full sequence is Histone H2B.1 (131 aa).

The segment covering 1 to 19 (MSAKAEKKPASKAPAEKKP) has biased composition (basic and acidic residues). The disordered stretch occupies residues 1-38 (MSAKAEKKPASKAPAEKKPAAKKTSTSTDGKKRSKARK). Residues lysine 7 and lysine 8 each carry the N6-acetyllysine; alternate modification. Glycyl lysine isopeptide (Lys-Gly) (interchain with G-Cter in SUMO); alternate cross-links involve residues lysine 7 and lysine 8. Serine 11 is subject to Phosphoserine. The residue at position 12 (lysine 12) is an N6-acetyllysine. N6-acetyllysine; alternate is present on residues lysine 17, lysine 18, lysine 22, and lysine 23. Residues lysine 17 and lysine 18 each participate in a glycyl lysine isopeptide (Lys-Gly) (interchain with G-Cter in SUMO); alternate cross-link. Lysine 22 is subject to N6-butyryllysine; alternate. Lysine 23 is modified (N6-methyllysine; alternate). N6-succinyllysine is present on lysine 35. Lysine 38 is subject to N6,N6-dimethyllysine. Lysine 47 is modified (N6-succinyllysine). Lysine 124 participates in a covalent cross-link: Glycyl lysine isopeptide (Lys-Gly) (interchain with G-Cter in ubiquitin).

This sequence belongs to the histone H2B family. As to quaternary structure, the nucleosome is a histone octamer containing two molecules each of H2A, H2B, H3 and H4 assembled in one H3-H4 heterotetramer and two H2A-H2B heterodimers. The octamer wraps approximately 147 bp of DNA. Monoubiquitinated by the RAD6/UBC2-BRE1 complex to form H2BK123ub1. H2BK123ub1 gives a specific tag for epigenetic transcriptional activation and is also prerequisite for H3K4me and H3K79me formation. H2BK123ub1 also modulates the formation of double-strand breaks during meiosis and is a prerequisite for DNA-damage checkpoint activation. Deubiquitination is performed by UBP8 in presence of SGF11. Post-translationally, phosphorylated by STE20 to form H2BS10ph during progression through meiotic prophase. May be correlated with chromosome condensation. H2BS10ph is also formed after H(2)O(2) treatment, and is a step leading to apoptosis. In terms of processing, acetylated by GCN5, a component of the SAGA complex, to form H2BK11ac and H2BK16ac. H2BK16ac can also be formed by ESA1, a component of the NuA4 histone acetyltransferase (HAT) complex. Acetylation of N-terminal lysines and particularly formation of H2BK11acK16ac has a positive effect on transcription. Sumoylation to form H2BK6su or H2BK7su, and probably also H2BK16su or H2BK17su, occurs preferentially near the telomeres and represses gene transcription.

It is found in the nucleus. Its subcellular location is the chromosome. Core component of nucleosome. Nucleosomes wrap and compact DNA into chromatin, limiting DNA accessibility to the cellular machineries which require DNA as a template. Histones thereby play a central role in transcription regulation, DNA repair, DNA replication and chromosomal stability. DNA accessibility is regulated via a complex set of post-translational modifications of histones, also called histone code, and nucleosome remodeling. This Saccharomyces cerevisiae (strain ATCC 204508 / S288c) (Baker's yeast) protein is Histone H2B.1 (HTB1).